We begin with the raw amino-acid sequence, 445 residues long: Phosphoglucosamine mutase 1 (445 aa).

Residue Ser-102 is the Phosphoserine intermediate of the active site. Positions 102, 241, 243, and 245 each coordinate Mg(2+). Ser-102 carries the phosphoserine modification.

This sequence belongs to the phosphohexose mutase family. Mg(2+) is required as a cofactor. Post-translationally, activated by phosphorylation.

It catalyses the reaction alpha-D-glucosamine 1-phosphate = D-glucosamine 6-phosphate. Catalyzes the conversion of glucosamine-6-phosphate to glucosamine-1-phosphate. The chain is Phosphoglucosamine mutase 1 from Shewanella sp. (strain MR-4).